Consider the following 397-residue polypeptide: ATP phosphoribosyltransferase regulatory subunit (397 aa).

It belongs to the class-II aminoacyl-tRNA synthetase family. HisZ subfamily. Heteromultimer composed of HisG and HisZ subunits.

The protein localises to the cytoplasm. It functions in the pathway amino-acid biosynthesis; L-histidine biosynthesis; L-histidine from 5-phospho-alpha-D-ribose 1-diphosphate: step 1/9. Required for the first step of histidine biosynthesis. May allow the feedback regulation of ATP phosphoribosyltransferase activity by histidine. This Nitrosococcus oceani (strain ATCC 19707 / BCRC 17464 / JCM 30415 / NCIMB 11848 / C-107) protein is ATP phosphoribosyltransferase regulatory subunit.